A 223-amino-acid polypeptide reads, in one-letter code: Ubiquitin carboxyl-terminal hydrolase isozyme L1 (223 aa).

At Met-1 the chain carries N-acetylmethionine. The UCH catalytic domain occupies 2 to 221 (QLKPMEINPE…VRFSAVALCK (220 aa)). An interaction with ubiquitin region spans residues 5-10 (PMEINP). The active-site Nucleophile is Cys-90. Ser-125 is modified (phosphoserine). The active-site Proton donor is the His-161. The segment at 211 to 216 (EVRFSA) is interaction with ubiquitin. A lipid anchor (S-farnesyl cysteine) is attached at Cys-220. Residues 221-223 (KAA) constitute a propeptide, removed in mature form.

It belongs to the peptidase C12 family. As to quaternary structure, monomer. Homodimer. Interacts with COPS5 and SNCA. In terms of processing, O-glycosylated.

The protein resides in the cytoplasm. The protein localises to the endoplasmic reticulum membrane. The enzyme catalyses Thiol-dependent hydrolysis of ester, thioester, amide, peptide and isopeptide bonds formed by the C-terminal Gly of ubiquitin (a 76-residue protein attached to proteins as an intracellular targeting signal).. Its function is as follows. Ubiquitin-protein hydrolase involved both in the processing of ubiquitin precursors and of ubiquitinated proteins. This enzyme is a thiol protease that recognizes and hydrolyzes a peptide bond at the C-terminal glycine of ubiquitin. Also binds to free monoubiquitin and may prevent its degradation in lysosomes. The homodimer may have ATP-independent ubiquitin ligase activity. The chain is Ubiquitin carboxyl-terminal hydrolase isozyme L1 (UCHL1) from Equus caballus (Horse).